We begin with the raw amino-acid sequence, 789 residues long: Trans-4-hydroxy-L-proline dehydratase (789 aa).

A PFL domain is found at glutamate 7–leucine 663. Cysteine 434 acts as the Cysteine radical intermediate in catalysis. Catalysis depends on glutamate 436, which acts as the Proton acceptor. The Glycine radical domain occupies glutamate 670–phenylalanine 789. Glycine 765 carries the post-translational modification Glycine radical.

This sequence belongs to the glycyl radical enzyme (GRE) family. HYPD subfamily. Post-translationally, requires the activating protein PflE to generate the key active site glycyl radical on Gly-765 that is involved in catalysis.

It catalyses the reaction trans-4-hydroxy-L-proline = (S)-1-pyrroline-5-carboxylate + H2O + H(+). Glycine radical enzyme that catalyzes the dehydration of the non-proteinogenic amino acid trans-4-hydroxy-L-proline (Hyp) to produce delta(1)-pyrroline-5-carboxylate (P5C). Is involved in the anaerobic degradation of 4-hydroxyproline. This is Trans-4-hydroxy-L-proline dehydratase from Clostridioides difficile (Peptoclostridium difficile).